Here is a 336-residue protein sequence, read N- to C-terminus: Methionine synthase (336 aa).

4 residues coordinate Zn(2+): H210, C212, E234, and C294.

It belongs to the archaeal MetE family. Zn(2+) serves as cofactor.

It functions in the pathway amino-acid biosynthesis; L-methionine biosynthesis via de novo pathway. Its function is as follows. Catalyzes the transfer of a methyl group to L-homocysteine resulting in methionine formation. The physiological methyl donor is unknown. The protein is Methionine synthase of Thermococcus kodakarensis (strain ATCC BAA-918 / JCM 12380 / KOD1) (Pyrococcus kodakaraensis (strain KOD1)).